The following is a 256-amino-acid chain: POU domain class 2-associating factor 1 (256 aa).

The tract at residues 1–23 (MLWQKPTAPEQAPAPARPYQGVR) is disordered. Residues 16-38 (ARPYQGVRVKEPVKELLRRKRGH) form the OCA domain.

It belongs to the POU2AF family. As to quaternary structure, interacts with POU2F1/OCT1 and POU2F2/OCT2; the interaction increases POU2F1 and POU2F2 transactivation activity. Post-translationally, ubiquitinated; mediated by SIAH1 or SIAH2 and leading to its subsequent proteasomal degradation. B-cell specific. Detected in mainly in spleen, but also in thymus, periphral blood leukocyte and small intestine.

The protein resides in the nucleus. In terms of biological role, transcriptional coactivator that specifically associates with either POU2F1/OCT1 or POU2F2/OCT2. It boosts the POU2F1/OCT1 mediated promoter activity and to a lesser extent, that of POU2F2/OCT2. It recognizes the POU domains of POU2F1/OCT1 and POU2F2/OCT2. It is essential for the response of B-cells to antigens and required for the formation of germinal centers. Regulates IL6 expression in B cells as POU2F2/OCT2 coactivator. The polypeptide is POU domain class 2-associating factor 1 (Homo sapiens (Human)).